The sequence spans 518 residues: MLRVVSWNINGIRRPLQGVANQEPSNCAAVAVGRILDELDADIVCLQETKVTRDALTEPLAIVEGYNSYFSFSRNRSGYSGVATFCKDNATPVAAEEGLSGLFATQNGDVGCYGNMDEFTQEELRALDSEGRALLTQHKIRTWEGKEKTLTLINVYCPHADPGRPERLVFKMRFYRLLQIRAEALLAAGSHVIILGDLNTAHRPIDHWDAVNLECFEEDPGRKWMDSLLSNLGCQSASHVGPFIDSYRCFQPKQEGAFTCWSAVTGARHLNYGSRLDYVLGDRTLVIDTFQASFLLPEVMGSDHCPVGAVLSVSSVPAKQCPPLCTRFLPEFAGTQLKILRFLVPLEQSPVLEQSTLQHNNQTRVQTCQNKAQVRSTRPQPSQVGSSRGQKNLKSYFQPSPSCPQASPDIELPSLPLMSALMTPKTPEEKAVAKVVKGQAKTSEAKDEKELRTSFWKSVLAGPLRTPLCGGHREPCVMRTVKKPGPNLGRRFYMCARPRGPPTDPSSRCNFFLWSRPS.

N8 and E48 together coordinate Mg(2+). Y156 is an active-site residue. Positions 197, 199, 303, and 304 each coordinate Mg(2+). The active-site Proton donor/acceptor is D197. H304 acts as the Proton acceptor in catalysis. Residues 355-405 are compositionally biased toward polar residues; it reads STLQHNNQTRVQTCQNKAQVRSTRPQPSQVGSSRGQKNLKSYFQPSPSCPQ. Residues 355–407 are disordered; sequence STLQHNNQTRVQTCQNKAQVRSTRPQPSQVGSSRGQKNLKSYFQPSPSCPQAS. K371 participates in a covalent cross-link: Glycyl lysine isopeptide (Lys-Gly) (interchain with G-Cter in ubiquitin). The interval 390-397 is required for the interaction and colocalization with PCNA in nuclear foci in presence of oxidative-induced DNA damaging agents; it reads QKNLKSYF. Positions 469, 472, 495, and 509 each coordinate Zn(2+). The segment at 469–518 adopts a GRF-type zinc-finger fold; sequence CGGHREPCVMRTVKKPGPNLGRRFYMCARPRGPPTDPSSRCNFFLWSRPS.

This sequence belongs to the DNA repair enzymes AP/ExoA family. As to quaternary structure, interacts with PCNA; this interaction is triggered by reactive oxygen species and increased by misincorporation of uracil in nuclear DNA. The cofactor is Mg(2+). Mn(2+) is required as a cofactor. Post-translationally, ubiquitinated by the CUL9-RBX1 complex. Ubiquitinated by MKRN3 at Lys-371 leading to proteasomal degradation. As to expression, highly expressed in brain and kidney. Weakly expressed in the fetal brain.

The protein localises to the nucleus. Its subcellular location is the cytoplasm. The protein resides in the mitochondrion. The catalysed reaction is Exonucleolytic cleavage in the 3'- to 5'-direction to yield nucleoside 5'-phosphates.. With respect to regulation, 3'-5' exonuclease activity is activated by sodium and manganese. 3'-5' exonuclease and 3'-phosphodiesterase activities are stimulated in presence of PCNA. Its function is as follows. Functions as a weak apurinic/apyrimidinic (AP) endodeoxyribonuclease in the DNA base excision repair (BER) pathway of DNA lesions induced by oxidative and alkylating agents. Initiates repair of AP sites in DNA by catalyzing hydrolytic incision of the phosphodiester backbone immediately adjacent to the damage, generating a single-strand break with 5'-deoxyribose phosphate and 3'-hydroxyl ends. Also displays double-stranded DNA 3'-5' exonuclease, 3'-phosphodiesterase activities. Shows robust 3'-5' exonuclease activity on 3'-recessed heteroduplex DNA and is able to remove mismatched nucleotides preferentially. Also exhibits 3'-5' exonuclease activity on a single nucleotide gap containing heteroduplex DNA and on blunt-ended substrates. Shows fairly strong 3'-phosphodiesterase activity involved in the removal of 3'-damaged termini formed in DNA by oxidative agents. In the nucleus functions in the PCNA-dependent BER pathway. Plays a role in reversing blocked 3' DNA ends, problematic lesions that preclude DNA synthesis. Required for somatic hypermutation (SHM) and DNA cleavage step of class switch recombination (CSR) of immunoglobulin genes. Required for proper cell cycle progression during proliferation of peripheral lymphocytes. The protein is DNA-(apurinic or apyrimidinic site) endonuclease 2 (APEX2) of Homo sapiens (Human).